A 399-amino-acid polypeptide reads, in one-letter code: Glutathione-independent formaldehyde dehydrogenase (399 aa).

A Zn(2+)-binding site is contributed by cysteine 47. Positions 48, 49, and 52 each coordinate NAD(+). Histidine 68, cysteine 98, cysteine 101, cysteine 104, cysteine 112, and aspartate 170 together coordinate Zn(2+). Valine 198, aspartate 218, arginine 223, valine 263, arginine 268, proline 300, glutamine 338, and threonine 339 together coordinate NAD(+).

It belongs to the zinc-containing alcohol dehydrogenase family. In terms of assembly, homotetramer. Requires Zn(2+) as cofactor.

The enzyme catalyses formaldehyde + NAD(+) + H2O = formate + NADH + 2 H(+). It carries out the reaction acetaldehyde + NAD(+) + H2O = acetate + NADH + 2 H(+). Dehydrogenase that catalyzes the NAD(+)-dependent oxidation of formaldehyde and acetaldehyde. Shows no detectable activity against either aldehydes with longer carbon chains or ethanol. The chain is Glutathione-independent formaldehyde dehydrogenase from Pseudomonas aeruginosa (strain LESB58).